We begin with the raw amino-acid sequence, 324 residues long: Putative exosome complex exonuclease RRP42 (324 aa).

It belongs to the RNase PH family. Component of the RNA exosome complex.

The protein localises to the nucleus. The protein resides in the nucleolus. Its subcellular location is the cytoplasm. Functionally, non-catalytic component of the RNA exosome complex which has 3'-&gt;5' exoribonuclease activity and participates in a multitude of cellular RNA processing and degradation events. The polypeptide is Putative exosome complex exonuclease RRP42 (exosc7) (Dictyostelium discoideum (Social amoeba)).